The sequence spans 471 residues: Venom prothrombin activator vestarin-D2 (471 aa).

The first 20 residues, 1–20 (MAPQLLLCLILTFLWSLPEA), serve as a signal peptide directing secretion. Positions 21–40 (ESNVFLKSNVANRFLQRTKR) are excised as a propeptide. Residues 41–86 (ANSIFEEIRPGNIERECVEEKCSKEEAREVFQDNEKTEAFWTVYVD) form the Gla domain. 10 positions are modified to 4-carboxyglutamate: Glu46, Glu47, Glu54, Glu56, Glu59, Glu60, Glu65, Glu66, Glu69, and Glu75. The cysteines at positions 57 and 62 are disulfide-linked. Residues 86-122 (DGDQCLSNPCHYRGTCKDGIGSYTCTCLPGYEGKNCE) form the EGF-like 1; calcium-binding domain. 10 cysteine pairs are disulfide-bonded: Cys90–Cys101, Cys95–Cys110, Cys112–Cys121, Cys129–Cys140, Cys136–Cys149, Cys151–Cys164, Cys172–Cys333, Cys233–Cys238, Cys381–Cys395, and Cys406–Cys434. The O-linked (Hex...) serine glycan is linked to Ser92. An EGF-like 2 domain is found at 129–164 (CRLFNGNCWHFCKTVQNDTQCSCAEGYRLGVDGFSC). Positions 182–226 (REASLPDFHFSDDYDAIDENNLVETVQSQSATLLKKSDNPSPDIR) are cleaved as a propeptide — activation peptide. The Peptidase S1 domain maps to 227–458 (IVSGLDCKLG…FIPWIKTIMR (232 aa)). His268 serves as the catalytic Charge relay system. N-linked (GlcNAc...) asparagine glycosylation occurs at Asn271. Asp313 functions as the Charge relay system in the catalytic mechanism. The active-site Charge relay system is the Ser410.

This sequence belongs to the peptidase S1 family. Snake venom subfamily. As to quaternary structure, heterodimer of a light chain and a heavy chain; disulfide-linked. In terms of processing, the vitamin K-dependent, enzymatic carboxylation of some glutamate residues allows the modified protein to bind calcium. As to expression, expressed by the venom gland.

Its subcellular location is the secreted. It carries out the reaction Selective cleavage of Arg-|-Thr and then Arg-|-Ile bonds in prothrombin to form thrombin.. Its function is as follows. Snake prothrombin activator that attacks the hemostatic system of prey. This protein is functionally similar to blood coagulation factor Xa. The chain is Venom prothrombin activator vestarin-D2 from Demansia vestigiata (Lesser black whip snake).